The primary structure comprises 890 residues: DNA mismatch repair protein MutS (890 aa).

634–641 (GPNMGGKS) is an ATP binding site.

Belongs to the DNA mismatch repair MutS family.

This protein is involved in the repair of mismatches in DNA. It is possible that it carries out the mismatch recognition step. This protein has a weak ATPase activity. The chain is DNA mismatch repair protein MutS from Burkholderia pseudomallei (strain 1710b).